The sequence spans 672 residues: Threonine--tRNA ligase (672 aa).

The TGS domain occupies 2-60 (SEPKNILLTVDGELREVTHGTTGLDLFREKPTTAVMRVDGLLWDLAREIPAGASVESVD). Residues 260–567 (DHRKLGAELD…LTEHYAGAFP (308 aa)) are catalytic. Zn(2+)-binding residues include C366, H417, and H544.

It belongs to the class-II aminoacyl-tRNA synthetase family. In terms of assembly, homodimer. Requires Zn(2+) as cofactor.

Its subcellular location is the cytoplasm. The enzyme catalyses tRNA(Thr) + L-threonine + ATP = L-threonyl-tRNA(Thr) + AMP + diphosphate + H(+). Catalyzes the attachment of threonine to tRNA(Thr) in a two-step reaction: L-threonine is first activated by ATP to form Thr-AMP and then transferred to the acceptor end of tRNA(Thr). Also edits incorrectly charged L-seryl-tRNA(Thr). The chain is Threonine--tRNA ligase from Micrococcus luteus (strain ATCC 4698 / DSM 20030 / JCM 1464 / CCM 169 / CCUG 5858 / IAM 1056 / NBRC 3333 / NCIMB 9278 / NCTC 2665 / VKM Ac-2230) (Micrococcus lysodeikticus).